The following is a 199-amino-acid chain: Large ribosomal subunit protein bL25 (199 aa).

It belongs to the bacterial ribosomal protein bL25 family. CTC subfamily. Part of the 50S ribosomal subunit; part of the 5S rRNA/L5/L18/L25 subcomplex. Contacts the 5S rRNA. Binds to the 5S rRNA independently of L5 and L18.

Functionally, this is one of the proteins that binds to the 5S RNA in the ribosome where it forms part of the central protuberance. The polypeptide is Large ribosomal subunit protein bL25 (Pelobacter propionicus (strain DSM 2379 / NBRC 103807 / OttBd1)).